A 219-amino-acid chain; its full sequence is Proteasome subunit beta type-9 (219 aa).

A propeptide spans 1–20 (MLRAGAPTGDLPRAGEVHTG) (removed in mature form). Residue Thr-21 is the Nucleophile of the active site. N6-acetyllysine is present on residues Lys-53 and Lys-109.

It belongs to the peptidase T1B family. As to quaternary structure, the 26S proteasome consists of a 20S proteasome core and two 19S regulatory subunits. The 20S proteasome core is composed of 28 subunits that are arranged in four stacked rings, resulting in a barrel-shaped structure. The two end rings are each formed by seven alpha subunits, and the two central rings are each formed by seven beta subunits. The catalytic chamber with the active sites is on the inside of the barrel. Component of the immunoproteasome, where it displaces the equivalent housekeeping subunit PSMB6. Component of the spermatoproteasome, a form of the proteasome specifically found in testis. In terms of assembly, (Microbial infection) Interacts with HIV-1 TAT protein. In terms of processing, autocleaved. The resulting N-terminal Thr residue of the mature subunit is responsible for the nucleophile proteolytic activity.

The protein localises to the cytoplasm. Its subcellular location is the nucleus. It carries out the reaction Cleavage of peptide bonds with very broad specificity.. In terms of biological role, the proteasome is a multicatalytic proteinase complex which is characterized by its ability to cleave peptides with Arg, Phe, Tyr, Leu, and Glu adjacent to the leaving group at neutral or slightly basic pH. The proteasome has an ATP-dependent proteolytic activity. This subunit is involved in antigen processing to generate class I binding peptides. Replacement of PSMB6 by PSMB9 increases the capacity of the immunoproteasome to cleave model peptides after hydrophobic and basic residues. This is Proteasome subunit beta type-9 (PSMB9) from Homo sapiens (Human).